An 882-amino-acid chain; its full sequence is Translation initiation factor IF-2 (882 aa).

Composition is skewed to polar residues over residues 38–56 (NDSN…AEYS), 97–124 (GGYS…YSQN), and 140–192 (GGYS…NRDS). Disordered regions lie at residues 38–192 (NDSN…NRDS) and 236–274 (STPA…AETE). Residues 243 to 259 (ENSKELNRKLGEKKKQQ) show a composition bias toward basic and acidic residues. The tr-type G domain occupies 380–553 (EKPPVITIMG…DMMLLKANPS (174 aa)). Positions 389–396 (GHVDHGKT) are G1. 389–396 (GHVDHGKT) is a binding site for GTP. Residues 414-418 (GITQH) are G2. Positions 435–438 (DTPG) are G3. GTP contacts are provided by residues 435–439 (DTPGH) and 489–492 (NKID). Residues 489–492 (NKID) are G4. The tract at residues 525-527 (SAL) is G5.

It belongs to the TRAFAC class translation factor GTPase superfamily. Classic translation factor GTPase family. IF-2 subfamily.

It localises to the cytoplasm. Functionally, one of the essential components for the initiation of protein synthesis. Protects formylmethionyl-tRNA from spontaneous hydrolysis and promotes its binding to the 30S ribosomal subunits. Also involved in the hydrolysis of GTP during the formation of the 70S ribosomal complex. The protein is Translation initiation factor IF-2 (infB) of Borreliella burgdorferi (strain ATCC 35210 / DSM 4680 / CIP 102532 / B31) (Borrelia burgdorferi).